Reading from the N-terminus, the 163-residue chain is 2-C-methyl-D-erythritol 2,4-cyclodiphosphate synthase (163 aa).

The a divalent metal cation site is built by Asp-8 and His-10. Residues 8-10 (DVH) and 34-35 (HS) each bind 4-CDP-2-C-methyl-D-erythritol 2-phosphate. His-42 is a binding site for a divalent metal cation. Residues 56–58 (DIG), 132–135 (TTTE), Phe-139, and Arg-142 contribute to the 4-CDP-2-C-methyl-D-erythritol 2-phosphate site.

It belongs to the IspF family. As to quaternary structure, homotrimer. A divalent metal cation is required as a cofactor.

It carries out the reaction 4-CDP-2-C-methyl-D-erythritol 2-phosphate = 2-C-methyl-D-erythritol 2,4-cyclic diphosphate + CMP. It functions in the pathway isoprenoid biosynthesis; isopentenyl diphosphate biosynthesis via DXP pathway; isopentenyl diphosphate from 1-deoxy-D-xylulose 5-phosphate: step 4/6. Involved in the biosynthesis of isopentenyl diphosphate (IPP) and dimethylallyl diphosphate (DMAPP), two major building blocks of isoprenoid compounds. Catalyzes the conversion of 4-diphosphocytidyl-2-C-methyl-D-erythritol 2-phosphate (CDP-ME2P) to 2-C-methyl-D-erythritol 2,4-cyclodiphosphate (ME-CPP) with a corresponding release of cytidine 5-monophosphate (CMP). The chain is 2-C-methyl-D-erythritol 2,4-cyclodiphosphate synthase from Moorella thermoacetica (strain ATCC 39073 / JCM 9320).